The sequence spans 262 residues: MASTWFTNIEALSYSVVEFIPYVGTVYSFKRAQLAYQERDWPRHWQSVANFLESAIRDVILFAGVEEVAGVVILHTIAESFTDKLVELYYEHNKDEADRVRQPRIEIPQPQALDPSNELVVVAGRTKGAHGEKVFHGKAKGVHRFHGARFAGTIKHSKYAPSGEYIQLHIPQGLFDGARVTFMWKWTKDEWGTENRPEVIVGTISLYIGDDKLTWFKFTKRQGAGWRPGEGSDFNCKVASLNLIIASTTVGDESLKIDLERI.

Part of the gene cluster that mediates the biosynthesis of iso-A82775C, a enylepoxycyclohexane and biosynthetic precursor of the chloropestolide anticancer natural products. Within the cluster, the prenyltransferase iacE prenylates siccayne to generate pestalodiol E, using dimethylallyl diphosphate (DMAPP) as cosubstrate. The probable oxidoreductase iacF is then involved in the epoxidation of pestalodiol F to pestalodiol F, which is further converted to pestalofone A by the short-chain dehydrogenase/reductase iacG. Iso-A82775C is subsequently generated from pestalofone A by the short-chain dehydrogenase/reductase iacC. Iso-A82775C is further condensed with maldoxin via a Diels-Alder reaction to produce the anticancer natural products chloropestolides A to E. The sequence is that of Iso-A82775C biosynthesis cluster protein B from Pestalotiopsis fici (strain W106-1 / CGMCC3.15140).